A 514-amino-acid polypeptide reads, in one-letter code: Type-2 serine--tRNA ligase (514 aa).

Residue Ala-313 participates in L-serine binding. Cys-315 contacts Zn(2+). Arg-344 provides a ligand contact to L-serine. Residues 344 to 346 (RWE) and 355 to 356 (RV) contribute to the ATP site. 361–363 (RGE) contacts L-serine. Residues Glu-363 and Cys-470 each contribute to the Zn(2+) site. Residue Arg-477 participates in ATP binding.

It belongs to the class-II aminoacyl-tRNA synthetase family. Type-2 seryl-tRNA synthetase subfamily. As to quaternary structure, homodimer. Zn(2+) is required as a cofactor.

The protein resides in the cytoplasm. It catalyses the reaction tRNA(Ser) + L-serine + ATP = L-seryl-tRNA(Ser) + AMP + diphosphate + H(+). The enzyme catalyses tRNA(Sec) + L-serine + ATP = L-seryl-tRNA(Sec) + AMP + diphosphate + H(+). It participates in aminoacyl-tRNA biosynthesis; selenocysteinyl-tRNA(Sec) biosynthesis; L-seryl-tRNA(Sec) from L-serine and tRNA(Sec): step 1/1. Functionally, catalyzes the attachment of serine to tRNA(Ser). Is also able to aminoacylate tRNA(Sec) with serine, to form the misacylated tRNA L-seryl-tRNA(Sec), which will be further converted into selenocysteinyl-tRNA(Sec). This Methanococcus maripaludis (strain C5 / ATCC BAA-1333) protein is Type-2 serine--tRNA ligase.